Reading from the N-terminus, the 231-residue chain is 7-cyano-7-deazaguanine synthase (231 aa).

ATP is bound at residue 8-18 (FSGGQDSTTCL). Residues Cys188, Cys197, Cys200, and Cys203 each coordinate Zn(2+).

This sequence belongs to the QueC family. Requires Zn(2+) as cofactor.

It catalyses the reaction 7-carboxy-7-deazaguanine + NH4(+) + ATP = 7-cyano-7-deazaguanine + ADP + phosphate + H2O + H(+). Its pathway is purine metabolism; 7-cyano-7-deazaguanine biosynthesis. Its function is as follows. Catalyzes the ATP-dependent conversion of 7-carboxy-7-deazaguanine (CDG) to 7-cyano-7-deazaguanine (preQ(0)). This Salmonella newport (strain SL254) protein is 7-cyano-7-deazaguanine synthase.